The sequence spans 316 residues: CD-NTase-associated protein 12 (316 aa).

Residues 4–121 (RIFIGSSSEG…MLGITQTRYE (118 aa)) enclose the TIR domain. The interval 161-316 (STVIAISYFE…ECVEIIEPQP (156 aa)) is STING domain. The 3',3'-c-di-GMP site is built by F172, P237, and D253.

This sequence in the C-terminal section; belongs to the bacterial STING family. As to quaternary structure, forms homodimers; in the presence of c-di-GMP forms filaments with an ordered array of parallel-stacked subunits.

It catalyses the reaction NAD(+) + H2O = ADP-D-ribose + nicotinamide + H(+). With respect to regulation, NAD(+) hydrolase activity is strongly stimulated by c-di-GMP, weakly by 3'3'-cGAMP, very weakly by c-di-AMP but not at all by 2'3'-cGAMP. Self-association of TIR domains is required for NADase activity. Effector protein of a CBASS antiviral system with NAD(+) hydrolase activity. CBASS (cyclic oligonucleotide-based antiphage signaling system) provides immunity against bacteriophage. The CD-NTase protein synthesizes cyclic nucleotides in response to infection; these serve as specific second messenger signals. The signals activate a diverse range of effectors, leading to bacterial cell death and thus abortive phage infection. A type I-D(GG) CBASS system. Functionally, binds c-di-GMP (synthesized by the cognate CdnE encoded upstream in the same operon) but not c-di-AMP, 2'-3'-cGAMP, 3'-3'-cGAMP or cUMP-AMP (tested without the N-terminal TIR domain). Upon activation by c-di-GMP forms filaments which hydrolyze NAD(+); filament formation is required for enzyme activation. The protein is CD-NTase-associated protein 12 of Lachnospiraceae bacterium (strain RUG226).